The primary structure comprises 131 residues: Fumarate reductase subunit C (131 aa).

3 consecutive transmembrane segments (helical) span residues 30 to 50, 63 to 83, and 109 to 129; these read EGTA…LFAL, FLQN…ALLH, and IIKS…FVAL.

This sequence belongs to the FrdC family. As to quaternary structure, part of an enzyme complex containing four subunits: a flavoprotein (FrdA), an iron-sulfur protein (FrdB), and two hydrophobic anchor proteins (FrdC and FrdD).

It localises to the cell inner membrane. Functionally, two distinct, membrane-bound, FAD-containing enzymes are responsible for the catalysis of fumarate and succinate interconversion; fumarate reductase is used in anaerobic growth, and succinate dehydrogenase is used in aerobic growth. Anchors the catalytic components of the fumarate reductase complex to the cell inner membrane, binds quinones. The chain is Fumarate reductase subunit C from Escherichia coli O17:K52:H18 (strain UMN026 / ExPEC).